The sequence spans 69 residues: Beta-defensin 1 (69 aa).

The first 21 residues, 1–21, serve as a signal peptide directing secretion; the sequence is MKTHYFLLVMLFFLFSQMELG. The propeptide occupies 22-32; it reads AGILTSLGRRT. 3 disulfides stabilise this stretch: Cys-37/Cys-66, Cys-44/Cys-59, and Cys-49/Cys-67.

It belongs to the beta-defensin family. In terms of assembly, monomer. Homodimer. In terms of tissue distribution, highly expressed in kidney.

It localises to the secreted. The protein resides in the membrane. Has bactericidal activity. May act as a ligand for C-C chemokine receptor CCR6. Positively regulates the sperm motility and bactericidal activity in a CCR6-dependent manner. Binds to CCR6 and triggers Ca2+ mobilization in the sperm which is important for its motility. In Rattus norvegicus (Rat), this protein is Beta-defensin 1 (Defb1).